A 195-amino-acid chain; its full sequence is MDRTTLPYGLFGLDIDPYKEFGATVELLSFLPSDFFPSVRDLLDTASALYRESLESSDHCSPHHTALRQAILCWGELMTLATWVGNNLEDPASRDLVVNYVNTNMGLKIRQLLWFHISCLTFGRETVLEYLVSFGVWIRTPPAYRPPNAPILSTLPETTVVRRRGRSPRRRTPSPRRRRSQSPRRRRSASPASQC.

Residues 148–195 (NAPILSTLPETTVVRRRGRSPRRRTPSPRRRRSQSPRRRRSASPASQC) form a disordered region. The span at 161–188 (VRRRGRSPRRRTPSPRRRRSQSPRRRRS) shows a compositional bias: basic residues. Residues serine 167, serine 174, and serine 182 each carry the phosphoserine; by host modification. Residues 167–172 (SPRRRT) form a 1; half-length repeat. Residues 167–188 (SPRRRTPSPRRRRSQSPRRRRS) form a 3 X 7 AA repeats of S-P-R-R-R-[PR]-S region. The Bipartite nuclear localization signal motif lies at 170-187 (RRTPSPRRRRSQSPRRRR). 2 consecutive repeat copies span residues 174–180 (SPRRRRS) and 182–188 (SPRRRRS). The RNA binding stretch occupies residues 189-195 (ASPASQC).

This sequence belongs to the orthohepadnavirus core antigen family. In terms of assembly, homodimerizes, then multimerizes. Interacts with cytosol exposed regions of viral L glycoprotein present in the reticulum-to-Golgi compartment. Interacts with human FLNB. Phosphorylated form interacts with host importin alpha; this interaction depends on the exposure of the NLS, which itself depends upon genome maturation and/or phosphorylation of the capsid protein. Interacts with host NUP153. Post-translationally, phosphorylated by host SRPK1, SRPK2, and maybe protein kinase C or GAPDH. Phosphorylation is critical for pregenomic RNA packaging. Protein kinase C phosphorylation is stimulated by HBx protein and may play a role in transport of the viral genome to the nucleus at the late step during the viral replication cycle.

It is found in the virion. The protein localises to the host cytoplasm. Its function is as follows. Self assembles to form an icosahedral capsid. Most capsids appear to be large particles with an icosahedral symmetry of T=4 and consist of 240 copies of capsid protein, though a fraction forms smaller T=3 particles consisting of 180 capsid proteins. Entering capsids are transported along microtubules to the nucleus. Phosphorylation of the capsid is thought to induce exposure of nuclear localization signal in the C-terminal portion of the capsid protein that allows binding to the nuclear pore complex via the importin (karyopherin-) alpha and beta. Capsids are imported in intact form through the nuclear pore into the nuclear basket, where it probably binds NUP153. Only capsids that contain the mature viral genome can release the viral DNA and capsid protein into the nucleoplasm. Immature capsids get stuck in the basket. Capsids encapsulate the pre-genomic RNA and the P protein. Pre-genomic RNA is reverse-transcribed into DNA while the capsid is still in the cytoplasm. The capsid can then either be directed to the nucleus, providing more genomes for transcription, or bud through the endoplasmic reticulum to provide new virions. This chain is Capsid protein, found in Hepatitis B virus genotype G (isolate IG29227/2000) (HBV-G).